The chain runs to 158 residues: MSTFTHINCQGEANMVDVSGKQESVREARAEALVTMSPETLNMIISGQHHKGDVFATARIAGIQAAKRTWDLIPLCHPLLLSKVEVSLTPVVERNQVRIESLCRLTGKTGVEMEALTAASVAALTIYDMCKAVQKDIVIEQVRLLEKCGGKSGHFIAK.

Substrate contacts are provided by residues 75–77 (LCH) and 113–114 (ME). Asp128 is a catalytic residue.

The protein belongs to the MoaC family. In terms of assembly, homohexamer; trimer of dimers.

It carries out the reaction (8S)-3',8-cyclo-7,8-dihydroguanosine 5'-triphosphate = cyclic pyranopterin phosphate + diphosphate. The protein operates within cofactor biosynthesis; molybdopterin biosynthesis. In terms of biological role, catalyzes the conversion of (8S)-3',8-cyclo-7,8-dihydroguanosine 5'-triphosphate to cyclic pyranopterin monophosphate (cPMP). This Pasteurella multocida (strain Pm70) protein is Cyclic pyranopterin monophosphate synthase.